The following is a 634-amino-acid chain: Threonine--tRNA ligase (634 aa).

The region spanning 1-61 (MINITLPDGS…DHDASLRIIT (61 aa)) is the TGS domain. The catalytic stretch occupies residues 243-534 (DHRRIGKAQD…LIEHHAGAFP (292 aa)). Residues Cys-334, His-385, and His-511 each contribute to the Zn(2+) site.

The protein belongs to the class-II aminoacyl-tRNA synthetase family. Homodimer. Zn(2+) serves as cofactor.

The protein localises to the cytoplasm. It catalyses the reaction tRNA(Thr) + L-threonine + ATP = L-threonyl-tRNA(Thr) + AMP + diphosphate + H(+). Catalyzes the attachment of threonine to tRNA(Thr) in a two-step reaction: L-threonine is first activated by ATP to form Thr-AMP and then transferred to the acceptor end of tRNA(Thr). Also edits incorrectly charged L-seryl-tRNA(Thr). The chain is Threonine--tRNA ligase from Xanthomonas oryzae pv. oryzae (strain MAFF 311018).